The following is a 334-amino-acid chain: ELMO domain-containing protein 1 (334 aa).

The ELMO domain occupies 133 to 314 (QHEEMLLKLW…KFRKRIIKQL (182 aa)).

Its function is as follows. Acts as a GTPase-activating protein (GAP) toward guanine nucleotide exchange factors like ARL2, ARL3, ARF1 and ARF6, but not for GTPases outside the Arf family. The polypeptide is ELMO domain-containing protein 1 (ELMOD1) (Homo sapiens (Human)).